Reading from the N-terminus, the 89-residue chain is Small ribosomal subunit protein uS19 (89 aa).

It belongs to the universal ribosomal protein uS19 family.

Functionally, protein S19 forms a complex with S13 that binds strongly to the 16S ribosomal RNA. The polypeptide is Small ribosomal subunit protein uS19 (Vesicomyosocius okutanii subsp. Calyptogena okutanii (strain HA)).